The chain runs to 176 residues: Conjugal transfer protein TraF (176 aa).

The first 24 residues, methionine 1 to glycine 24, serve as a signal peptide directing secretion.

Belongs to the peptidase S26C family.

The protein localises to the periplasm. Its function is as follows. Involved in conjugal transfer of the plasmid. The protein is Conjugal transfer protein TraF (traF) of Agrobacterium fabrum (strain C58 / ATCC 33970) (Agrobacterium tumefaciens (strain C58)).